The sequence spans 303 residues: AP2-like ethylene-responsive transcription factor At1g79700 (303 aa).

A compositionally biased stretch (basic residues) spans 1 to 10 (MAKVSGRSKK). Residues 1–55 (MAKVSGRSKKTIVDDEISDKTASASESASIALTSKRKRKSPPRNAPLQRSSPYRG) form a disordered region. The segment covering 20 to 32 (KTASASESASIAL) has biased composition (polar residues). 2 DNA-binding regions (AP2/ERF) span residues 52–118 (PYRG…LNFP) and 154–202 (KYRG…TNFD). The disordered stretch occupies residues 212 to 259 (AADKADSDSKPIRSPSREPESSDDNKSPKSEEVIEPSTSPEVIPTRRS). Residues 214 to 243 (DKADSDSKPIRSPSREPESSDDNKSPKSEE) are compositionally biased toward basic and acidic residues.

Belongs to the AP2/ERF transcription factor family. AP2 subfamily.

The protein resides in the nucleus. Probably acts as a transcriptional activator. Binds to the GCC-box pathogenesis-related promoter element. May be involved in the regulation of gene expression by stress factors and by components of stress signal transduction pathways. This is AP2-like ethylene-responsive transcription factor At1g79700 from Arabidopsis thaliana (Mouse-ear cress).